Consider the following 863-residue polypeptide: Axin-1 (863 aa).

Residues 1 to 81 (MNVQEQGFPL…PEGSASPTPP (81 aa)) are disordered. Positions 20-29 (APRPPVPGEE) match the Tankyrase-binding motif motif. Over residues 34-61 (STDSRPVNHSFCSGKGTSIKSETSTATP) the composition is skewed to polar residues. The residue at position 75 (S75) is a Phosphoserine. A Phosphoserine; by CK1 modification is found at S77. Positions 88-211 (SLHSLLDDQD…LKSDIYLEYT (124 aa)) constitute an RGS domain. The interval 209 to 338 (EYTRTGSESP…DADTLSLTDS (130 aa)) is interaction with TP53. Disordered stretches follow at residues 215–240 (SESP…YLPT), 249–268 (CDQD…SRLT), and 315–344 (ATSA…DGIP). At S217 the chain carries Phosphoserine. The segment covering 249-258 (CDQDADEDDG) has biased composition (acidic residues). Residues 325 to 339 (SLSSDADTLSLTDSS) show a composition bias toward low complexity. The tract at residues 348–432 (IRKQHRREMQ…EDGEMPSGPM (85 aa)) is interaction with GSK3B. The interaction with SIAH1 stretch occupies residues 353 to 411 (RREMQESIQVNGRVPLPHIPRTYRMPKEIRVEPQKFAEELIHRLEAVQRTREAEEKLEE). Positions 433–501 (ASHKLPSVPA…SPDSGHVAKT (69 aa)) are interaction with beta-catenin. S468 is subject to Phosphoserine; by CK1. A Phosphothreonine; by GSK3-beta modification is found at T480. S485 is modified (phosphoserine; by GSK3-beta). A phosphoserine mark is found at S492 and S509. The segment at 505 to 758 (GGTASGHGKH…PVLSVVPAVS (254 aa)) is interaction with RNF111. Positions 529–542 (HHRHVHHHVHHNSA) are enriched in basic residues. Disordered regions lie at residues 529-624 (HHRH…DAEK) and 642-664 (HRKA…SRPL). Residues 543-554 (RPKEQMEAEVAR) are compositionally biased toward basic and acidic residues. The segment at 572 to 790 (PRSYSENAGT…CDSIVVAYYF (219 aa)) is interaction with PPP2CA. Residues 575–584 (YSENAGTTLS) show a composition bias toward polar residues. The segment at 678 to 753 (AQLRNSVQPS…RPACAPVLSV (76 aa)) is interaction with HIPK2. The DIX domain occupies 781-863 (CDSIVVAYYF…KIIGKVEKVD (83 aa)). Residues K858 and K861 each participate in a glycyl lysine isopeptide (Lys-Gly) (interchain with G-Cter in SUMO) cross-link.

Homodimer. Component of the beta-catenin destruction complex, containing at least CTNNB1, an axin and GSK3B, that regulates CTNNB1 protein levels through phosphorylation and ubiquitination. Interacts with GSK3B; the interaction hyperphosphorylates CTNNB1 leading to its ubiquitination and destruction. Interacts with DAXX; the interaction stimulates the interaction of DAXX with TP53, stimulates 'Ser-46' phosphorylation of TP53 and induces cell death on UV irradiation. Also interacts with APC, RNF111, SMAD6 and SMAD7. Interacts (via the C-terminal) with PPP1CA; the interaction dephosphorylates AXIN1 and regulates interaction with GSK3B. Interacts with PPP2CA; the interaction dephosphorylates AXIN1. Interacts with MDFI; the interaction decreases AXIN1-mediated JUN N-terminal kinase (JNK) activation. Interacts with MDFIC; the interaction inhibits beta-cateninin-mediated signaling and AXIN1-mediated JUN N-terminal kinase (JNK) activation. Binds ANKRD6, PIAS1, PIAS2, PIAS4, SUMO1, MAP3K1 and MAP3K4. Component of the AXIN1-HIPK2-TP53 complex. Interacts directly in the complex with TP53 and HIPK2. Interacts with DIXDC1; the interaction prevents interaction with MAP3K1. Interacts with AIDA; the interaction blocks the AXIN1-mediated JNK activation through disrupting AXIN1 homodimerization and Wnt signaling. Interacts with LRP5 (via its phosphorylated PPPSP motifs); the interaction is stimulated by WNT1 and GSK3B and activates beta-catenin signaling. Interacts with CTNNB1 (via the armadillo repeats 2-7). Interacts with MACF1. Found in a complex composed of MACF1, APC, AXIN1, CTNNB1 and GSK3B. Interacts with TNKS. Interacts with DAB2; the interaction is mutually exclusive with the AXIN1:PPP1CA interaction. Interacts with ZBED3 (via PPPSP motif); the interaction is direct, enhanced by protein kinase GSK3B and casein kinase CSNK1E activities and decreases GSK3B-induced beta-catenin serine and threonine phosphorylations. Interacts with WDR26. Interacts with GID8. Interacts with SIAH1 and SIAH2; both probably catalyze AXIN1 ubiquitination and subsequent proteasome-mediated ubiquitin-dependent degradation. Interaction with GSK3B and AXIN1 is competitive. Post-translationally, phosphorylation and dephosphorylation of AXIN1 regulates assembly and function of the beta-catenin complex. Phosphorylated by CK1 and GSK3B. Dephosphorylated by PPP1CA and PPP2CA. Phosphorylation by CK1 enhances binding of GSK3B to AXIN1. Also phosphorylated by CDK2 which regulates interaction with CTNBB1. In terms of processing, ADP-ribosylated by tankyrase TNKS and TNKS2. Poly-ADP-ribosylated protein is recognized by RNF146, followed by ubiquitination and subsequent activation of the Wnt signaling pathway. Ubiquitinated by RNF146 when poly-ADP-ribosylated, leading to its degradation and subsequent activation of the Wnt signaling pathway. Deubiquitinated by USP34, deubiquitinated downstream of beta-catenin stabilization step: deubiquitination is important for nuclear accumulation during Wnt signaling to positively regulate beta-catenin (CTNBB1)-mediated transcription. Sumoylation at Lys-858 and Lys-861 prevents ubiquitination and degradation. Sumoylation is required for AXIN1-mediated JNK activation. Ubiquitination by SIAH1 and SIAH2 induces its proteasomal degradation as part of the activation of the Wnt signaling pathway. In terms of tissue distribution, expressed in embryonic stem cells.

It is found in the cytoplasm. It localises to the nucleus. Its subcellular location is the cell membrane. The protein resides in the membrane. Component of the beta-catenin destruction complex required for regulating CTNNB1 levels through phosphorylation and ubiquitination, and modulating Wnt-signaling. Controls dorsoventral patterning via two opposing effects; down-regulates CTNNB1 to inhibit the Wnt signaling pathway and ventralize embryos, but also dorsalizes embryos by activating a Wnt-independent JNK signaling pathway. In Wnt signaling, probably facilitates the phosphorylation of CTNNB1 and APC by GSK3B. Likely to function as a tumor suppressor. Facilitates the phosphorylation of TP53 by HIPK2 upon ultraviolet irradiation. Enhances TGF-beta signaling by recruiting the RNF111 E3 ubiquitin ligase and promoting the degradation of inhibitory SMAD7. Also a component of the AXIN1-HIPK2-TP53 complex which controls cell growth, apoptosis and development. This chain is Axin-1 (Axin1), found in Mus musculus (Mouse).